A 397-amino-acid polypeptide reads, in one-letter code: Mannosylglycerate synthase (397 aa).

Residues 7–11 (PFKHE), Ile-35, Gln-66, Lys-76, Asp-100, and 100–101 (DA) contribute to the GDP-alpha-D-mannose site. Position 102 (Asp-102) interacts with a divalent metal cation. (R)-glycerate contacts are provided by residues Arg-131 and 136 to 139 (AMIT). Residues Leu-163 and Asp-192 each contribute to the GDP-alpha-D-mannose site. Position 217 (His-217) interacts with a divalent metal cation. The GDP-alpha-D-mannose site is built by Arg-218 and Tyr-220.

This sequence belongs to the glycosyltransferase 78 family. As to quaternary structure, homotetramer. Dimer of dimers. The cofactor is Mg(2+). Ca(2+) serves as cofactor. Mn(2+) is required as a cofactor. It depends on Ni(2+) as a cofactor. Requires Co(2+) as cofactor.

The enzyme catalyses (R)-glycerate + GDP-alpha-D-mannose = (2R)-2-O-(alpha-D-mannosyl)-glycerate + GDP + H(+). Its activity is regulated as follows. Inhibited by GDP. Its function is as follows. Involved in the biosynthesis of the stress protectant 2-O-alpha-D-mannosyl glycerate (MG) which is produced in response to growth at supraoptimal temperature and salinity, and protects several enzymes against inactivation by temperature, freeze-drying and osmotic stress. Catalyzes the condensation of alpha-GDP-D-mannose (GDP-Man) with D-glycerate to produce alpha-mannosyl-D-glycerate. It is specific for GDP-Man, but it can also use alpha-GDP-D-glucose (GDP-Glc), beta-GDP-D-fructose, alpha-UDP-D-mannose and alpha-UDP-D-glucose as sugar donors. It is specific for D-glycerate, but it can also use D-lactate and glycolate as sugar acceptors. This reaction occurs with a net retention of anomeric configuration; the newly formed glycosidic linkage has the same alpha configuration as the sugar donor. This chain is Mannosylglycerate synthase (mgs), found in Rhodothermus marinus (Rhodothermus obamensis).